A 115-amino-acid polypeptide reads, in one-letter code: uncharacterized protein (115 aa).

The region spanning 1-91 (MTEYNANSIR…SELEGFKNVS (91 aa)) is the HTH arsR-type domain. A DNA-binding region (H-T-H motif) is located at residues 30 to 53 (ASLISHTLLLSYATVLRHLRILND).

Functionally, essential for virus function. This is an uncharacterized protein from Saccharolobus solfataricus (Sulfolobus solfataricus).